A 259-amino-acid chain; its full sequence is Uridylate kinase (259 aa).

Lys-10 to Gly-13 lines the ATP pocket. A UMP-binding site is contributed by Gly-52. 2 residues coordinate ATP: Gly-53 and Arg-57. UMP-binding positions include Asp-72 and Asn-134 to Thr-141. ATP is bound by residues Tyr-168 and Asp-171. Residues Ile-236–Ala-259 form a disordered region.

This sequence belongs to the UMP kinase family. In terms of assembly, homohexamer.

It localises to the cytoplasm. It catalyses the reaction UMP + ATP = UDP + ADP. Its pathway is pyrimidine metabolism; CTP biosynthesis via de novo pathway; UDP from UMP (UMPK route): step 1/1. Its activity is regulated as follows. Inhibited by UTP. In terms of biological role, catalyzes the reversible phosphorylation of UMP to UDP. This chain is Uridylate kinase, found in Frankia casuarinae (strain DSM 45818 / CECT 9043 / HFP020203 / CcI3).